The primary structure comprises 644 residues: ATP-dependent zinc metalloprotease FtsH (644 aa).

The Cytoplasmic segment spans residues 1–4 (MAKN). The chain crosses the membrane as a helical span at residues 5–25 (LILWLVIAVVLMSVFQSFGPS). The Periplasmic segment spans residues 26–98 (ESNGRKVDYS…VGEPPEEPSL (73 aa)). The chain crosses the membrane as a helical span at residues 99–119 (LASIFISWFPMLLLIGVWIFF). Residues 120–644 (MRQMQGGGGK…NTMSEQLGDK (525 aa)) lie on the Cytoplasmic side of the membrane. 192-199 (GPPGTGKT) contributes to the ATP binding site. Histidine 414 contacts Zn(2+). Glutamate 415 is an active-site residue. Zn(2+) contacts are provided by histidine 418 and aspartate 492. Residues 598–644 (VRPPAGWEEPGASNNSGDNGSPKAPRPVDEPRTPNPGNTMSEQLGDK) are disordered. The span at 632–644 (NPGNTMSEQLGDK) shows a compositional bias: polar residues.

This sequence in the central section; belongs to the AAA ATPase family. In the C-terminal section; belongs to the peptidase M41 family. As to quaternary structure, homohexamer. Zn(2+) is required as a cofactor.

The protein resides in the cell inner membrane. Its function is as follows. Acts as a processive, ATP-dependent zinc metallopeptidase for both cytoplasmic and membrane proteins. Plays a role in the quality control of integral membrane proteins. The polypeptide is ATP-dependent zinc metalloprotease FtsH (Shigella flexneri).